We begin with the raw amino-acid sequence, 316 residues long: Phosphoglycerate mutase-like protein AT74 (316 aa).

The active-site Tele-phosphohistidine intermediate is the histidine 17. Residue glutamate 106 is the Proton donor/acceptor of the active site. The interval 275–316 (KECETEATEDREEEEEEEGKRVNLLTSSEYSNEPELYNGQCC) is disordered. Acidic residues predominate over residues 279–291 (TEATEDREEEEEE).

The protein belongs to the phosphoglycerate mutase family. Expressed in roots, leaves, stems, flowers and siliques.

Phosphoglycerate mutase-like protein lacking PGM activity. May play a role in carbohydrates metabolism. This is Phosphoglycerate mutase-like protein AT74 from Arabidopsis thaliana (Mouse-ear cress).